The sequence spans 71 residues: Protein KleB (71 aa).

A DNA-binding region (H-T-H motif) is located at residues 9-28 (IETCCRRCGKSIRTLSHTII).

In Escherichia coli, this protein is Protein KleB (kleB).